Consider the following 166-residue polypeptide: Small ribosomal subunit protein uS5 (166 aa).

The region spanning L11–V74 is the S5 DRBM domain.

Belongs to the universal ribosomal protein uS5 family. In terms of assembly, part of the 30S ribosomal subunit. Contacts proteins S4 and S8.

With S4 and S12 plays an important role in translational accuracy. Its function is as follows. Located at the back of the 30S subunit body where it stabilizes the conformation of the head with respect to the body. The sequence is that of Small ribosomal subunit protein uS5 from Latilactobacillus sakei subsp. sakei (strain 23K) (Lactobacillus sakei subsp. sakei).